The sequence spans 145 residues: D-aminoacyl-tRNA deacylase (145 aa).

Residues 137–138 (GP) carry the Gly-cisPro motif, important for rejection of L-amino acids motif.

Belongs to the DTD family. As to quaternary structure, homodimer.

The protein resides in the cytoplasm. The catalysed reaction is glycyl-tRNA(Ala) + H2O = tRNA(Ala) + glycine + H(+). It catalyses the reaction a D-aminoacyl-tRNA + H2O = a tRNA + a D-alpha-amino acid + H(+). In terms of biological role, an aminoacyl-tRNA editing enzyme that deacylates mischarged D-aminoacyl-tRNAs. Also deacylates mischarged glycyl-tRNA(Ala), protecting cells against glycine mischarging by AlaRS. Acts via tRNA-based rather than protein-based catalysis; rejects L-amino acids rather than detecting D-amino acids in the active site. By recycling D-aminoacyl-tRNA to D-amino acids and free tRNA molecules, this enzyme counteracts the toxicity associated with the formation of D-aminoacyl-tRNA entities in vivo and helps enforce protein L-homochirality. This is D-aminoacyl-tRNA deacylase from Yersinia pestis bv. Antiqua (strain Antiqua).